Here is a 279-residue protein sequence, read N- to C-terminus: Shikimate dehydrogenase (NADP(+)) (279 aa).

Shikimate-binding positions include 17–19 and Thr64; that span reads SQS. Residue Lys68 is the Proton acceptor of the active site. The shikimate site is built by Asn89 and Asp105. NADP(+)-binding positions include 130-134 and Leu218; that span reads GAGGA. Tyr220 serves as a coordination point for shikimate. NADP(+) is bound at residue Gly242.

The protein belongs to the shikimate dehydrogenase family. Homodimer.

The enzyme catalyses shikimate + NADP(+) = 3-dehydroshikimate + NADPH + H(+). Its pathway is metabolic intermediate biosynthesis; chorismate biosynthesis; chorismate from D-erythrose 4-phosphate and phosphoenolpyruvate: step 4/7. In terms of biological role, involved in the biosynthesis of the chorismate, which leads to the biosynthesis of aromatic amino acids. Catalyzes the reversible NADPH linked reduction of 3-dehydroshikimate (DHSA) to yield shikimate (SA). In Methylococcus capsulatus (strain ATCC 33009 / NCIMB 11132 / Bath), this protein is Shikimate dehydrogenase (NADP(+)).